A 394-amino-acid chain; its full sequence is Aspergillopepsin-1 (394 aa).

The N-terminal stretch at 1–20 is a signal peptide; the sequence is MVVFSKTAALVLGLSSAVSA. Residues 21-69 constitute a propeptide, activation peptide; the sequence is APAPTRKGFTINQIARPANKTRTINLPGMYARSLAKFGGTVPQSVKEAA. One can recognise a Peptidase A1 domain in the interval 85 to 391; sequence YLTPVTVGKS…NSEGPKLGFA (307 aa). Catalysis depends on residues D101 and D283. A disulfide bond links C319 and C354.

It belongs to the peptidase A1 family. Monomer.

The protein resides in the secreted. It catalyses the reaction Hydrolysis of proteins with broad specificity. Generally favors hydrophobic residues in P1 and P1', but also accepts Lys in P1, which leads to activation of trypsinogen. Does not clot milk.. In terms of biological role, secreted aspartic endopeptidase that allows assimilation of proteinaceous substrates. The scissile peptide bond is attacked by a nucleophilic water molecule activated by two aspartic residues in the active site. Shows a broad primary substrate specificity. Favors hydrophobic residues at the P1 and P1' positions, but also accepts a lysine residue in the P1 position, leading to the activation of trypsinogen and chymotrypsinogen A. The protein is Aspergillopepsin-1 (pepA) of Aspergillus niger (strain ATCC MYA-4892 / CBS 513.88 / FGSC A1513).